Consider the following 118-residue polypeptide: Ribulose bisphosphate carboxylase small subunit (118 aa).

Belongs to the RuBisCO small chain family. Heterohexadecamer of 8 large and 8 small subunits.

Functionally, ruBisCO catalyzes two reactions: the carboxylation of D-ribulose 1,5-bisphosphate, the primary event in carbon dioxide fixation, as well as the oxidative fragmentation of the pentose substrate. Both reactions occur simultaneously and in competition at the same active site. Although the small subunit is not catalytic it is essential for maximal activity. This is Ribulose bisphosphate carboxylase small subunit from Rhodobacter capsulatus (Rhodopseudomonas capsulata).